A 145-amino-acid chain; its full sequence is D-aminoacyl-tRNA deacylase (145 aa).

The Gly-cisPro motif, important for rejection of L-amino acids motif lies at 137–138 (GP).

The protein belongs to the DTD family. As to quaternary structure, homodimer.

Its subcellular location is the cytoplasm. It carries out the reaction glycyl-tRNA(Ala) + H2O = tRNA(Ala) + glycine + H(+). The enzyme catalyses a D-aminoacyl-tRNA + H2O = a tRNA + a D-alpha-amino acid + H(+). Its function is as follows. An aminoacyl-tRNA editing enzyme that deacylates mischarged D-aminoacyl-tRNAs. Also deacylates mischarged glycyl-tRNA(Ala), protecting cells against glycine mischarging by AlaRS. Acts via tRNA-based rather than protein-based catalysis; rejects L-amino acids rather than detecting D-amino acids in the active site. By recycling D-aminoacyl-tRNA to D-amino acids and free tRNA molecules, this enzyme counteracts the toxicity associated with the formation of D-aminoacyl-tRNA entities in vivo and helps enforce protein L-homochirality. The sequence is that of D-aminoacyl-tRNA deacylase from Carboxydothermus hydrogenoformans (strain ATCC BAA-161 / DSM 6008 / Z-2901).